A 396-amino-acid chain; its full sequence is Elongation factor Tu (396 aa).

Residues 10-206 (KPHCNIGTIG…AVDSYIPQPE (197 aa)) form the tr-type G domain. A G1 region spans residues 19–26 (GHVDHGKT). 19–26 (GHVDHGKT) provides a ligand contact to GTP. Mg(2+) is bound at residue Thr-26. The interval 60-64 (GITIS) is G2. Positions 81 to 84 (DCPG) are G3. GTP is bound by residues 81–85 (DCPGH) and 136–139 (NKVD). Residues 136 to 139 (NKVD) are G4. The segment at 174 to 176 (SAV) is G5.

The protein belongs to the TRAFAC class translation factor GTPase superfamily. Classic translation factor GTPase family. EF-Tu/EF-1A subfamily. In terms of assembly, monomer.

It localises to the cytoplasm. It catalyses the reaction GTP + H2O = GDP + phosphate + H(+). Its function is as follows. GTP hydrolase that promotes the GTP-dependent binding of aminoacyl-tRNA to the A-site of ribosomes during protein biosynthesis. This Rhizorhabdus wittichii (strain DSM 6014 / CCUG 31198 / JCM 15750 / NBRC 105917 / EY 4224 / RW1) (Sphingomonas wittichii) protein is Elongation factor Tu.